The primary structure comprises 499 residues: Transcriptional regulator sdnM (499 aa).

The protein localises to the nucleus. Its pathway is antibiotic biosynthesis. Functionally, transcriptional regulator; part of the gene cluster that mediates the biosynthesis of sordarin and hypoxysordarin, glycoside antibiotics with a unique tetracyclic diterpene aglycone structure. First, the geranylgeranyl diphosphate synthase sdnC constructs GGDP from farnesyl diphosphate and isopentenyl diphosphate. The diterpene cyclase sdnA then catalyzes the cyclization of GGDP to afford cycloaraneosene. Cycloaraneosene is then hydroxylated four times by the putative cytochrome P450 monooxygenases sdnB, sdnE, sdnF and sdnH to give a hydroxylated cycloaraneosene derivative such as cycloaraneosene-8,9,13,19-tetraol. Although the order of the hydroxylations is unclear, at least C8, C9 and C13 of the cycloaraneosene skeleton are hydroxylated before the sordaricin formation. Dehydration of the 13-hydroxy group of the hydroxylated cycloaraneosene derivative might be catalyzed by an unassigned hypothetical protein such as sdnG and sdnP to construct the cyclopentadiene moiety. The FAD-dependent oxidoreductase sdnN is proposed to catalyze the oxidation at C9 of the hydroxylated cycloaraneosene derivative and also catalyze the Baeyer-Villiger oxidation to give the lactone intermediate. The presumed lactone intermediate would be hydrolyzed to give an acrolein moiety and a carboxylate moiety. Then, [4+2]cycloaddition would occur between the acrolein moiety and the cyclopentadiene moiety to give sordaricin. SdnN might also be involved in the [4+2]cycloaddition after the hypothesized oxidation to accommodate the oxidized product and prompt the [4+2]cycloaddition. GDP-6-deoxy-D-altrose may be biosynthesized from GDP-D-mannose by the putative GDP-mannose-4,6-dehydratase sdnI and the short-chain dehydrogenase sdnK. The glycosyltransferase sdnJ catalyzes the attachment of 6-deoxy-D-altrose onto the 19-hydroxy group of sordaricin to give 4'-O-demethylsordarin. The methyltransferase sdnD would complete the biosynthesis of sordarin. Sordarin can be further modified into hypoxysordarin. The unique acyl chain at the 3'-hydroxy group of hypoxysordarin would be constructed by an iterative type I PKS sdnO and the trans-acting polyketide methyltransferase sdnL. SdnL would be responsible for the introduction of an alpha-methyl group of the polyketide chain. Alternatively, the beta-lactamase-like protein sdnR might be responsible for the cleavage and transfer of the polyketide chain from the PKS sdnO to sordarin. Two putative cytochrome P450 monooxygenases, sdnQ and sdnT, might catalyze the epoxidations of the polyketide chain to complete the biosynthesis of hypoxysordarin. Transcriptional regulators sdnM and sdnS are presumably encoded for the transcriptional regulation of the expression of the sdn gene cluster. This Sordaria araneosa (Pleurage araneosa) protein is Transcriptional regulator sdnM.